The primary structure comprises 268 residues: UPF0328 protein ECU05_1640/ECU11_0090 (268 aa).

This sequence belongs to the UPF0328 family.

This chain is UPF0328 protein ECU05_1640/ECU11_0090, found in Encephalitozoon cuniculi (strain GB-M1) (Microsporidian parasite).